The chain runs to 481 residues: Glutamyl-tRNA(Gln) amidotransferase subunit A (481 aa).

Active-site charge relay system residues include Lys-77 and Ser-151. Ser-175 acts as the Acyl-ester intermediate in catalysis.

Belongs to the amidase family. GatA subfamily. As to quaternary structure, heterotrimer of A, B and C subunits.

It catalyses the reaction L-glutamyl-tRNA(Gln) + L-glutamine + ATP + H2O = L-glutaminyl-tRNA(Gln) + L-glutamate + ADP + phosphate + H(+). Functionally, allows the formation of correctly charged Gln-tRNA(Gln) through the transamidation of misacylated Glu-tRNA(Gln) in organisms which lack glutaminyl-tRNA synthetase. The reaction takes place in the presence of glutamine and ATP through an activated gamma-phospho-Glu-tRNA(Gln). The polypeptide is Glutamyl-tRNA(Gln) amidotransferase subunit A (Rubrobacter xylanophilus (strain DSM 9941 / JCM 11954 / NBRC 16129 / PRD-1)).